A 90-amino-acid chain; its full sequence is Putative membrane protein insertion efficiency factor (90 aa).

It belongs to the UPF0161 family.

It is found in the cell membrane. In terms of biological role, could be involved in insertion of integral membrane proteins into the membrane. The chain is Putative membrane protein insertion efficiency factor from Lactococcus lactis subsp. cremoris (strain SK11).